The sequence spans 915 residues: Coiled-coil domain-containing protein 57 (915 aa).

Residues M1 to Q502 form a centrosomal targeting domain region. Coiled-coil stretches lie at residues V92 to E173, L214 to D422, K456 to E483, and I521 to Q548. 3 disordered regions span residues T555–A574, P606–P653, and Q724–D915. Residues P606 to D915 form a microtubule binding domain region. The span at H613 to T627 shows a compositional bias: polar residues. Low complexity predominate over residues G628–G652. Over residues G745–S758 the composition is skewed to basic and acidic residues. 3 stretches are compositionally biased toward polar residues: residues P781 to S794, S819 to L830, and S841 to S852. A compositionally biased stretch (low complexity) spans K879–A891.

Interacts with CEP63; the interaction is required for their location to proximal end of centrioles. Interacts with microtubules.

Its subcellular location is the cytoplasm. The protein localises to the cytoskeleton. It is found in the microtubule organizing center. The protein resides in the centrosome. It localises to the centriolar satellite. Its subcellular location is the centriole. The protein localises to the spindle. Functionally, pleiotropic regulator of centriole duplication, mitosis, and ciliogenesis. Critical interface between centrosome and microtubule-mediated cellular processes. Centriole duplication protein required for recruitment of CEP63, CEP152, and PLK4 to the centrosome. Independent of its centrosomal targeting, localizes to and interacts with microtubules and regulates microtubule nucleation, stability, and mitotic progression. This is Coiled-coil domain-containing protein 57 from Homo sapiens (Human).